The sequence spans 321 residues: Degreening-related gene dee76 protein (321 aa).

This sequence belongs to the Mo25 family.

This chain is Degreening-related gene dee76 protein (DEE76), found in Auxenochlorella protothecoides (Green microalga).